Reading from the N-terminus, the 440-residue chain is D-serine dehydratase (440 aa).

At Lys-116 the chain carries N6-(pyridoxal phosphate)lysine.

Belongs to the serine/threonine dehydratase family. DsdA subfamily. As to quaternary structure, monomer. Requires pyridoxal 5'-phosphate as cofactor.

It catalyses the reaction D-serine = pyruvate + NH4(+). This is D-serine dehydratase from Salmonella typhi.